The sequence spans 451 residues: Phosphoglucosamine mutase (451 aa).

The active-site Phosphoserine intermediate is the Ser-101. 4 residues coordinate Mg(2+): Ser-101, Asp-240, Asp-242, and Asp-244. Residue Ser-101 is modified to Phosphoserine.

The protein belongs to the phosphohexose mutase family. Mg(2+) serves as cofactor. Activated by phosphorylation.

The enzyme catalyses alpha-D-glucosamine 1-phosphate = D-glucosamine 6-phosphate. Its function is as follows. Catalyzes the conversion of glucosamine-6-phosphate to glucosamine-1-phosphate. The protein is Phosphoglucosamine mutase of Alkalilimnicola ehrlichii (strain ATCC BAA-1101 / DSM 17681 / MLHE-1).